The following is a 613-amino-acid chain: Tetratricopeptide repeat protein 39A (613 aa).

TPR repeat units follow at residues alanine 315–tryptophan 348, cysteine 505–isoleucine 538, and proline 546–tyrosine 579.

Belongs to the TTC39 family.

This is Tetratricopeptide repeat protein 39A (TTC39A) from Homo sapiens (Human).